The sequence spans 68 residues: MRTSYLLLFTLCLLLSEMASGDNFLTGLGHRSDHYNCVRSGGQCLYSACPIYTKIQGTCYQGKAKCCK.

Positions Met1–Gly21 are cleaved as a signal peptide. Residues Asp22–Ser32 constitute a propeptide that is removed on maturation. 3 cysteine pairs are disulfide-bonded: Cys37–Cys66, Cys44–Cys59, and Cys49–Cys67.

The protein belongs to the beta-defensin family. As to quaternary structure, monomer. Homodimer.

It is found in the secreted. The protein localises to the membrane. Has bactericidal activity. May act as a ligand for C-C chemokine receptor CCR6. Positively regulates the sperm motility and bactericidal activity in a CCR6-dependent manner. Binds to CCR6 and triggers Ca2+ mobilization in the sperm which is important for its motility. The protein is Beta-defensin 1 (DEFB1) of Hylobates moloch (Silvery gibbon).